The sequence spans 328 residues: Ketol-acid reductoisomerase (NADP(+)) (328 aa).

A KARI N-terminal Rossmann domain is found at 2-182 (AKIYRDVDAS…GATRAGVIET (181 aa)). NADP(+) contacts are provided by residues 25–28 (YGIQ), R48, S53, and 83–86 (DMEQ). H108 is an active-site residue. G134 lines the NADP(+) pocket. The 146-residue stretch at 183–328 (TFAEETETDL…IEMRRLLFGQ (146 aa)) folds into the KARI C-terminal knotted domain. 4 residues coordinate Mg(2+): D191, E195, E227, and E231. S252 contacts substrate.

It belongs to the ketol-acid reductoisomerase family. It depends on Mg(2+) as a cofactor.

The catalysed reaction is (2R)-2,3-dihydroxy-3-methylbutanoate + NADP(+) = (2S)-2-acetolactate + NADPH + H(+). It catalyses the reaction (2R,3R)-2,3-dihydroxy-3-methylpentanoate + NADP(+) = (S)-2-ethyl-2-hydroxy-3-oxobutanoate + NADPH + H(+). Its pathway is amino-acid biosynthesis; L-isoleucine biosynthesis; L-isoleucine from 2-oxobutanoate: step 2/4. It participates in amino-acid biosynthesis; L-valine biosynthesis; L-valine from pyruvate: step 2/4. Its function is as follows. Involved in the biosynthesis of branched-chain amino acids (BCAA). Catalyzes an alkyl-migration followed by a ketol-acid reduction of (S)-2-acetolactate (S2AL) to yield (R)-2,3-dihydroxy-isovalerate. In the isomerase reaction, S2AL is rearranged via a Mg-dependent methyl migration to produce 3-hydroxy-3-methyl-2-ketobutyrate (HMKB). In the reductase reaction, this 2-ketoacid undergoes a metal-dependent reduction by NADPH to yield (R)-2,3-dihydroxy-isovalerate. The polypeptide is Ketol-acid reductoisomerase (NADP(+)) (Pyrobaculum arsenaticum (strain DSM 13514 / JCM 11321 / PZ6)).